A 168-amino-acid chain; its full sequence is Small ribosomal subunit protein uS9 (168 aa).

Residues 1-11 are compositionally biased toward low complexity; that stretch reads MAQNEELTTEA. Residues 1-36 are disordered; the sequence is MAQNEELTTEAVEAEENPTSYTSESSAAEAAPKKER.

Belongs to the universal ribosomal protein uS9 family.

The sequence is that of Small ribosomal subunit protein uS9 from Pseudarthrobacter chlorophenolicus (strain ATCC 700700 / DSM 12829 / CIP 107037 / JCM 12360 / KCTC 9906 / NCIMB 13794 / A6) (Arthrobacter chlorophenolicus).